A 1531-amino-acid chain; its full sequence is Lysophospholipase nte1 (1531 aa).

The Cytoplasmic segment spans residues 1 to 72 (MATGDGIIAA…TPPAPSTMVG (72 aa)). Residues 73 to 93 (WIGWIFSFIFQVIPSVLYWIV) traverse the membrane as a helical segment. The Lumenal portion of the chain corresponds to 94 to 115 (TFTTITLPTWLFTLFSMSLTFT). Residues 116 to 136 (MNFTTLLLIALAVVSTISWFI) traverse the membrane as a helical segment. The Cytoplasmic portion of the chain corresponds to 137-1531 (RYRFLNMYSR…RTLAPRRASI (1395 aa)). Disordered regions lie at residues 242 to 265 (GSDEELNRMAGESSDEDDHRPDGR), 303 to 385 (ASSA…TRRK), and 766 to 789 (NTSSSRVSGSAAAANDPRRKKQSR). Residues 325–343 (REMDDSPHVYQGDRLDPAS) are compositionally biased toward basic and acidic residues. A nucleoside 3',5'-cyclic phosphate contacts are provided by residues 689 to 809 (GGTS…AVAS) and 849 to 969 (RLTS…IAQR). Positions 768 to 779 (SSSRVSGSAAAA) are enriched in low complexity. A PNPLA domain is found at 1228–1392 (LVLGGGGARG…IDNLTVDHMK (165 aa)). The GXGXXG signature appears at 1232–1237 (GGGARG). Positions 1259–1263 (GTSIG) match the GXSXG motif. The active-site Nucleophile is Ser1261. Asp1379 serves as the catalytic Proton acceptor. A DGA/G motif is present at residues 1379-1381 (DGG). The tract at residues 1510–1531 (LPEETEEKKKLQRTLAPRRASI) is disordered.

This sequence belongs to the NTE family.

The protein localises to the endoplasmic reticulum membrane. The enzyme catalyses a 1-acyl-sn-glycero-3-phosphocholine + H2O = sn-glycerol 3-phosphocholine + a fatty acid + H(+). Inhibited by organophosphorus esters. Functionally, intracellular phospholipase B that catalyzes the double deacylation of phosphatidylcholine (PC) to glycerophosphocholine (GroPCho). Plays an important role in membrane lipid homeostasis. Responsible for the rapid PC turnover in response to inositol, elevated temperatures, or when choline is present in the growth medium. The sequence is that of Lysophospholipase nte1 (nte1) from Aspergillus niger (strain ATCC MYA-4892 / CBS 513.88 / FGSC A1513).